The sequence spans 538 residues: NAD(P)H-quinone oxidoreductase chain 4 (538 aa).

14 helical membrane-spanning segments follow: residues 11 to 31 (FPWLSLSIFFPIVGALIVPFI), 43 to 63 (YALIIALITFLITVAAYFKGF), 95 to 115 (MPLILLTSFITSLAVLAAWPV), 119 to 139 (PKLFFFLILAMDGGQIAVFAV), 143 to 163 (LLFFLAWELELFPVYLFLAIW), 175 to 195 (FIIYTAGSSLFILLAGLAMGF), 217 to 237 (GFQLLCYSGLLIAFGVKLPIV), 251 to 271 (TAPVHMLLAGILLKMGGYALL), 285 to 305 (FAPLLIVLGVVNIIYAALTSF), 314 to 334 (IAYSSISHMGFVLIGIGSFSS), 340 to 360 (AMLQMVSHGLIGASLFFLVGA), 382 to 404 (IMFALWTACAFASLALPGMSGFI), 425 to 445 (IVVASLAAIGVILTPIYLLSM), and 472 to 492 (IYIIACLLVPIIGIGLYPKIM).

Belongs to the complex I subunit 4 family.

The protein localises to the cellular thylakoid membrane. The catalysed reaction is a plastoquinone + NADH + (n+1) H(+)(in) = a plastoquinol + NAD(+) + n H(+)(out). It carries out the reaction a plastoquinone + NADPH + (n+1) H(+)(in) = a plastoquinol + NADP(+) + n H(+)(out). NDH-1 shuttles electrons from NAD(P)H, via FMN and iron-sulfur (Fe-S) centers, to quinones in the respiratory chain. The immediate electron acceptor for the enzyme in this species is believed to be plastoquinone. Couples the redox reaction to proton translocation (for every two electrons transferred, four hydrogen ions are translocated across the cytoplasmic membrane), and thus conserves the redox energy in a proton gradient. The sequence is that of NAD(P)H-quinone oxidoreductase chain 4 from Prochlorococcus marinus (strain NATL2A).